The sequence spans 217 residues: Large ribosomal subunit protein uL4 (217 aa).

Residues 58–90 form a disordered region; sequence TAATKGRSDVSGGGKKPWRQKGTGRARSGTSRS.

Belongs to the universal ribosomal protein uL4 family. In terms of assembly, part of the 50S ribosomal subunit.

Functionally, one of the primary rRNA binding proteins, this protein initially binds near the 5'-end of the 23S rRNA. It is important during the early stages of 50S assembly. It makes multiple contacts with different domains of the 23S rRNA in the assembled 50S subunit and ribosome. Its function is as follows. Forms part of the polypeptide exit tunnel. In Syntrophus aciditrophicus (strain SB), this protein is Large ribosomal subunit protein uL4.